Here is a 546-residue protein sequence, read N- to C-terminus: Chaperonin GroEL 3 (546 aa).

ATP contacts are provided by residues 30 to 33 (TLGP), K51, 87 to 91 (DGTTT), G415, and D496.

It belongs to the chaperonin (HSP60) family. In terms of assembly, forms a cylinder of 14 subunits composed of two heptameric rings stacked back-to-back. Interacts with the co-chaperonin GroES.

It localises to the cytoplasm. It catalyses the reaction ATP + H2O + a folded polypeptide = ADP + phosphate + an unfolded polypeptide.. Together with its co-chaperonin GroES, plays an essential role in assisting protein folding. The GroEL-GroES system forms a nano-cage that allows encapsulation of the non-native substrate proteins and provides a physical environment optimized to promote and accelerate protein folding. The polypeptide is Chaperonin GroEL 3 (Bradyrhizobium diazoefficiens (strain JCM 10833 / BCRC 13528 / IAM 13628 / NBRC 14792 / USDA 110)).